A 397-amino-acid polypeptide reads, in one-letter code: Tryptophan synthase beta chain (397 aa).

An N6-(pyridoxal phosphate)lysine modification is found at Lys-87.

It belongs to the TrpB family. In terms of assembly, tetramer of two alpha and two beta chains. The cofactor is pyridoxal 5'-phosphate.

The enzyme catalyses (1S,2R)-1-C-(indol-3-yl)glycerol 3-phosphate + L-serine = D-glyceraldehyde 3-phosphate + L-tryptophan + H2O. It participates in amino-acid biosynthesis; L-tryptophan biosynthesis; L-tryptophan from chorismate: step 5/5. The beta subunit is responsible for the synthesis of L-tryptophan from indole and L-serine. This chain is Tryptophan synthase beta chain, found in Escherichia coli O139:H28 (strain E24377A / ETEC).